A 413-amino-acid chain; its full sequence is MVFDKLLEQAGINLDLDGKDMMDSEMLGDVSDLIKIAVIGVGGSGNNTITRLYDLGVQGADLIAMNTDAQHLHYVKAHKKLLLGRSITHGKGSGGDPRVGYRAAEASASEIAEVVKGYDLIFLTAGMGNGTGTGATPVIARIIKETARNNGLPQEPLVISVVTFPFKMEGRVRIEKAKAGIEMLLEYSDTVIIIQNDKLKELVPKLPIQIAFRFADEIIARMVKGIVETIKLPSMVNIDYADIYSVMKGGGPALIGIGESDSNNRAVDAVMEALNNKMLDVEFGSGDKALVHFTVGPDVSLEEITKAMEIVYERLGEKSEIKWGAMIEEDMGKTVRAMVIMTGVKSPQILGNIEPNALTYSSSSIVVPRSKRLTESKVDEIFDSIDPRTSKLKKMKDNSRVNKIFRDLGFYEL.

Residues G130–G132, E169, R173, and D216 each bind GTP.

It belongs to the FtsZ family. Homodimer. Polymerizes to form a dynamic ring structure in a strictly GTP-dependent manner. Interacts directly with several other division proteins.

Its subcellular location is the cytoplasm. Its function is as follows. Essential cell division protein that forms a contractile ring structure (Z ring) at the future cell division site. The regulation of the ring assembly controls the timing and the location of cell division. One of the functions of the FtsZ ring is to recruit other cell division proteins to the septum to produce a new cell wall between the dividing cells. Binds GTP and shows GTPase activity. This Pyrococcus abyssi (strain GE5 / Orsay) protein is Cell division protein FtsZ 2.